The chain runs to 223 residues: UPF0758 protein Plut_0598 (223 aa).

Residues 100–222 enclose the MPN domain; that stretch reads RVQGAKDVFE…WFSFRESNLL (123 aa). Positions 171, 173, and 184 each coordinate Zn(2+). A JAMM motif motif is present at residues 171–184; the sequence is HNHPSGDTEPSNAD.

The protein belongs to the UPF0758 family.

The polypeptide is UPF0758 protein Plut_0598 (Chlorobium luteolum (strain DSM 273 / BCRC 81028 / 2530) (Pelodictyon luteolum)).